A 414-amino-acid chain; its full sequence is eIF5-mimic protein 1 (414 aa).

The tract at residues 1 to 22 (MNKNQKPVLTGQRFKTRKRDEK) is disordered. One can recognise a W2 domain in the interval 248–414 (VQQSLGTRKE…LQNAEEEFRI (167 aa)).

It belongs to the BZW family.

The protein resides in the cytoplasm. Its function is as follows. Translation initiation regulator which may repress non-AUG initiated translation and repeat-associated non-AUG (RAN) initiated translation by acting as a competitive inhibitor of eukaryotic translation initiation factor 5 (EIF5) function. The polypeptide is eIF5-mimic protein 1 (BZW2) (Gallus gallus (Chicken)).